A 255-amino-acid polypeptide reads, in one-letter code: tRNA (guanine-N(1)-)-methyltransferase (255 aa).

S-adenosyl-L-methionine is bound by residues G113 and 133–138; that span reads IGDYVL.

It belongs to the RNA methyltransferase TrmD family. In terms of assembly, homodimer.

It localises to the cytoplasm. It catalyses the reaction guanosine(37) in tRNA + S-adenosyl-L-methionine = N(1)-methylguanosine(37) in tRNA + S-adenosyl-L-homocysteine + H(+). In terms of biological role, specifically methylates guanosine-37 in various tRNAs. The protein is tRNA (guanine-N(1)-)-methyltransferase of Salmonella paratyphi A (strain ATCC 9150 / SARB42).